A 502-amino-acid chain; its full sequence is Dipeptide and tripeptide permease A (502 aa).

Topologically, residues 1–35 (MSTANNKPTDESVSLNAFKQPKAFYLIFSIELWER) are cytoplasmic. Residues 36–56 (FGFYGLQGIMAVYLVKQLGMS) traverse the membrane as a helical segment. Residues 57–60 (EADS) are Periplasmic-facing. Residues 61–81 (ITLFSSFSALVYGLVAVGGWL) form a helical membrane-spanning segment. The Cytoplasmic portion of the chain corresponds to 82 to 90 (GDKVLGTKR). A helical membrane pass occupies residues 91–111 (VIMLGAVVLAIGYGLVAWSGH). D112 is a topological domain (periplasmic). The helical transmembrane segment at 113–133 (AAVVYMGMATIAVGNGLFKAN) threads the bilayer. Topologically, residues 134–154 (PSSLLSTCYNKDDPRLDGAFT) are cytoplasmic. A helical transmembrane segment spans residues 155-175 (MYYMSINIGSFFSMLATPWLA). The Periplasmic portion of the chain corresponds to 176 to 179 (AKFG). A helical transmembrane segment spans residues 180–200 (WSVAFALSFVGMLITVVNFLF). Over 201 to 218 (CRSWVKNYGSKPDFEPVH) the chain is Cytoplasmic. Residues 219 to 239 (IGKLLATIVGVVILATIATWL) traverse the membrane as a helical segment. Residues 240 to 247 (LHNQGVAR) are Periplasmic-facing. A helical transmembrane segment spans residues 248–268 (AVLGVVALGIICIFAKEAFAM). Over 269 to 275 (QGAARRK) the chain is Cytoplasmic. Residues 276–296 (MIVAFILMLQAVVFFVLYSQM) traverse the membrane as a helical segment. The Periplasmic portion of the chain corresponds to 297 to 321 (PTSLNFFAIRNVEHSILSIAFEPEQ). A helical transmembrane segment spans residues 322–342 (FQALNPFWIMIGSPILAAIYN). The Cytoplasmic portion of the chain corresponds to 343–353 (KMGDRLPMPHK). Residues 354 to 374 (FAIGMVLCSGAFLVLPLGTKF) form a helical membrane-spanning segment. Residues 375–384 (ATDAGIVSVN) lie on the Periplasmic side of the membrane. A helical transmembrane segment spans residues 385–405 (WLILSYALQSIGELMISGLGL). The Cytoplasmic segment spans residues 406-415 (AMVAQLVPQR). Residues 416–436 (LMGFIMGSWFLTTAGAALIAG) traverse the membrane as a helical segment. Residues 437–460 (KIANLMAVPENVTDPLVSLEVYGR) lie on the Periplasmic side of the membrane. Residues 461–481 (VFMQIGIATAVIAVLMLLTAP) traverse the membrane as a helical segment. Topologically, residues 482-502 (KLNRMTLEDDKAAKATDTATA) are cytoplasmic.

It belongs to the major facilitator superfamily. Proton-dependent oligopeptide transporter (POT/PTR) (TC 2.A.17) family. DtpA subfamily.

The protein localises to the cell inner membrane. In terms of biological role, proton-dependent permease that transports di- and tripeptides. This chain is Dipeptide and tripeptide permease A, found in Enterobacter sp. (strain 638).